A 415-amino-acid polypeptide reads, in one-letter code: Multifunctional CCA protein (415 aa).

The ATP site is built by G8 and R11. CTP-binding residues include G8 and R11. Mg(2+) is bound by residues D21 and D23. Positions 91, 137, and 140 each coordinate ATP. The CTP site is built by R91, R137, and R140. One can recognise an HD domain in the interval T228–W329.

This sequence belongs to the tRNA nucleotidyltransferase/poly(A) polymerase family. Bacterial CCA-adding enzyme type 1 subfamily. Monomer. Can also form homodimers and oligomers. Mg(2+) is required as a cofactor. It depends on Ni(2+) as a cofactor.

It carries out the reaction a tRNA precursor + 2 CTP + ATP = a tRNA with a 3' CCA end + 3 diphosphate. It catalyses the reaction a tRNA with a 3' CCA end + 2 CTP + ATP = a tRNA with a 3' CCACCA end + 3 diphosphate. Functionally, catalyzes the addition and repair of the essential 3'-terminal CCA sequence in tRNAs without using a nucleic acid template. Adds these three nucleotides in the order of C, C, and A to the tRNA nucleotide-73, using CTP and ATP as substrates and producing inorganic pyrophosphate. tRNA 3'-terminal CCA addition is required both for tRNA processing and repair. Also involved in tRNA surveillance by mediating tandem CCA addition to generate a CCACCA at the 3' terminus of unstable tRNAs. While stable tRNAs receive only 3'-terminal CCA, unstable tRNAs are marked with CCACCA and rapidly degraded. The chain is Multifunctional CCA protein from Cronobacter sakazakii (strain ATCC BAA-894) (Enterobacter sakazakii).